Consider the following 806-residue polypeptide: Lon protease 1 (806 aa).

A Lon N-terminal domain is found at 31 to 235 (VPLIAVPSHP…KVLELIYEEL (205 aa)). 389–396 (GPPGVGKT) is a binding site for ATP. Residues 626–806 (AMYSGMVMGL…NMREVIKLLF (181 aa)) enclose the Lon proteolytic domain. Catalysis depends on residues Ser-714 and Lys-757.

The protein belongs to the peptidase S16 family. As to quaternary structure, homohexamer. Organized in a ring with a central cavity.

The protein localises to the cytoplasm. It carries out the reaction Hydrolysis of proteins in presence of ATP.. Functionally, ATP-dependent serine protease that mediates the selective degradation of mutant and abnormal proteins as well as certain short-lived regulatory proteins. Required for cellular homeostasis and for survival from DNA damage and developmental changes induced by stress. Degrades polypeptides processively to yield small peptide fragments that are 5 to 10 amino acids long. Binds to DNA in a double-stranded, site-specific manner. The sequence is that of Lon protease 1 from Borreliella burgdorferi (strain ATCC 35210 / DSM 4680 / CIP 102532 / B31) (Borrelia burgdorferi).